The following is a 176-amino-acid chain: RNA polymerase sigma factor SigO (176 aa).

The short motif at 30–43 is the Polymerase core binding element; it reads DARSLDELFKQFYK. A DNA-binding region (H-T-H motif) is located at residues 139–158; that stretch reads MQEIADSLGESRQNISNIHK.

Belongs to the sigma-70 factor family. Interacts with RNA polymerase.

Its function is as follows. Sigma factors are initiation factors that promote the attachment of RNA polymerase to specific initiation sites and are then released. Together with its coactivator RsoA, positively regulates the expression of at least three operons, including oxdC-yvrL, sigO-rsoA and yvrJ. Required for the acid stress-dependent induction of the oxalate decarboxylase oxdC. This chain is RNA polymerase sigma factor SigO (sigO), found in Bacillus subtilis (strain 168).